A 537-amino-acid polypeptide reads, in one-letter code: Phosphoenolpyruvate carboxykinase (ATP) (537 aa).

Arg-61, Tyr-194, and Lys-200 together coordinate substrate. ATP contacts are provided by residues Lys-200, His-219, and 235-243; that span reads GLSGTGKTT. Mn(2+) contacts are provided by Lys-200 and His-219. Residue Asp-256 coordinates Mn(2+). Residues Glu-284, Arg-322, and Thr-448 each contribute to the ATP site. Arg-322 is a binding site for substrate.

It belongs to the phosphoenolpyruvate carboxykinase (ATP) family. The cofactor is Mn(2+).

It localises to the cytoplasm. The enzyme catalyses oxaloacetate + ATP = phosphoenolpyruvate + ADP + CO2. It participates in carbohydrate biosynthesis; gluconeogenesis. Its function is as follows. Involved in the gluconeogenesis. Catalyzes the conversion of oxaloacetate (OAA) to phosphoenolpyruvate (PEP) through direct phosphoryl transfer between the nucleoside triphosphate and OAA. The chain is Phosphoenolpyruvate carboxykinase (ATP) from Bradyrhizobium sp. (strain ORS 278).